We begin with the raw amino-acid sequence, 241 residues long: Serine protease 58 (241 aa).

Positions 1–17 (MKFILLWALLNLTVALA) are cleaved as a signal peptide. One can recognise a Peptidase S1 domain in the interval 18–239 (FNPDYTVSST…YIPWIENVIQ (222 aa)). A disulfide bond links cysteine 41 and cysteine 57. Residues histidine 56 and aspartate 101 each act as charge relay system in the active site. Cystine bridges form between cysteine 133/cysteine 201, cysteine 165/cysteine 180, and cysteine 191/cysteine 215. Asparagine 156 and asparagine 173 each carry an N-linked (GlcNAc...) asparagine glycan. The active-site Charge relay system is serine 195.

The protein belongs to the peptidase S1 family.

It localises to the secreted. The enzyme catalyses Preferential cleavage: Arg-|-Xaa, Lys-|-Xaa.. The polypeptide is Serine protease 58 (PRSS58) (Homo sapiens (Human)).